Here is a 163-residue protein sequence, read N- to C-terminus: MHTRAIYPGTFDPITNGHADLIERAAKLFKHVIIGIAANPSKQPRFTLEERVELVNRVTAHLDNVEVVGFSGLLVDFAKEQRASVLVRGLRAVSDFEYEFQLANMNRRLSPDLESVFLTPAEENSFISSTLVKEVALHGGDVSQFVHPEVASALAAKLKLAKA.

Substrate is bound at residue T10. Residues 10–11 (TF) and H18 contribute to the ATP site. Positions 42, 74, and 88 each coordinate substrate. ATP contacts are provided by residues 89–91 (GLR), E99, and 124–130 (NSFISST).

This sequence belongs to the bacterial CoaD family. Homohexamer. Mg(2+) serves as cofactor.

Its subcellular location is the cytoplasm. It carries out the reaction (R)-4'-phosphopantetheine + ATP + H(+) = 3'-dephospho-CoA + diphosphate. Its pathway is cofactor biosynthesis; coenzyme A biosynthesis; CoA from (R)-pantothenate: step 4/5. Reversibly transfers an adenylyl group from ATP to 4'-phosphopantetheine, yielding dephospho-CoA (dPCoA) and pyrophosphate. The protein is Phosphopantetheine adenylyltransferase of Shewanella oneidensis (strain ATCC 700550 / JCM 31522 / CIP 106686 / LMG 19005 / NCIMB 14063 / MR-1).